Reading from the N-terminus, the 69-residue chain is Putative membrane protein insertion efficiency factor (69 aa).

This sequence belongs to the UPF0161 family.

The protein localises to the cell inner membrane. Functionally, could be involved in insertion of integral membrane proteins into the membrane. The polypeptide is Putative membrane protein insertion efficiency factor (Magnetococcus marinus (strain ATCC BAA-1437 / JCM 17883 / MC-1)).